The following is a 98-amino-acid chain: uncharacterized protein (98 aa).

This sequence belongs to the YciI family. In terms of assembly, homodimer.

This is an uncharacterized protein from Haemophilus influenzae (strain ATCC 51907 / DSM 11121 / KW20 / Rd).